The sequence spans 330 residues: Inorganic pyrophosphatase 2, mitochondrial (330 aa).

The N-terminal 27 residues, 1 to 27 (MRALLPLLSVGRGWRVGAAARPPRRVM), are a transit peptide targeting the mitochondrion. Aspartate 159, aspartate 164, and aspartate 196 together coordinate Mg(2+). Lysine 211 carries the post-translational modification N6-succinyllysine. Lysine 219 carries the post-translational modification N6-acetyllysine. Residue lysine 254 is modified to N6-succinyllysine. An N6-acetyllysine modification is found at lysine 256.

The protein belongs to the PPase family. Homodimer. Requires Mg(2+) as cofactor.

The protein localises to the mitochondrion. It catalyses the reaction diphosphate + H2O = 2 phosphate + H(+). Its function is as follows. Hydrolyzes inorganic pyrophosphate. This activity is essential for correct regulation of mitochondrial membrane potential, and mitochondrial organization and function. The protein is Inorganic pyrophosphatase 2, mitochondrial (Ppa2) of Mus musculus (Mouse).